A 129-amino-acid chain; its full sequence is Small ribosomal subunit protein uS11 (129 aa).

Belongs to the universal ribosomal protein uS11 family. As to quaternary structure, part of the 30S ribosomal subunit. Interacts with proteins S7 and S18. Binds to IF-3.

Located on the platform of the 30S subunit, it bridges several disparate RNA helices of the 16S rRNA. Forms part of the Shine-Dalgarno cleft in the 70S ribosome. The chain is Small ribosomal subunit protein uS11 from Rhizorhabdus wittichii (strain DSM 6014 / CCUG 31198 / JCM 15750 / NBRC 105917 / EY 4224 / RW1) (Sphingomonas wittichii).